The sequence spans 175 residues: Inosine/xanthosine triphosphatase (175 aa).

A substrate-binding site is contributed by 8 to 13 (TTNPAK). 2 residues coordinate Mg(2+): Asp38 and Glu68. 68-69 (EA) lines the substrate pocket.

The protein belongs to the YjjX NTPase family. As to quaternary structure, homodimer. Requires Mg(2+) as cofactor. The cofactor is Mn(2+).

It catalyses the reaction XTP + H2O = XDP + phosphate + H(+). The catalysed reaction is ITP + H2O = IDP + phosphate + H(+). Functionally, phosphatase that hydrolyzes non-canonical purine nucleotides such as XTP and ITP to their respective diphosphate derivatives. Probably excludes non-canonical purines from DNA/RNA precursor pool, thus preventing their incorporation into DNA/RNA and avoiding chromosomal lesions. The protein is Inosine/xanthosine triphosphatase of Yersinia enterocolitica serotype O:8 / biotype 1B (strain NCTC 13174 / 8081).